A 158-amino-acid polypeptide reads, in one-letter code: NAD(P)H-quinone oxidoreductase subunit N, organellar chromatophore (158 aa).

It belongs to the complex I NdhN subunit family. In terms of assembly, NDH-1 can be composed of about 15 different subunits; different subcomplexes with different compositions have been identified which probably have different functions.

Its subcellular location is the plastid. The protein resides in the organellar chromatophore thylakoid membrane. It catalyses the reaction a plastoquinone + NADH + (n+1) H(+)(in) = a plastoquinol + NAD(+) + n H(+)(out). It carries out the reaction a plastoquinone + NADPH + (n+1) H(+)(in) = a plastoquinol + NADP(+) + n H(+)(out). Its function is as follows. NDH-1 shuttles electrons from an unknown electron donor, via FMN and iron-sulfur (Fe-S) centers, to quinones in the respiratory and/or the photosynthetic chain. The immediate electron acceptor for the enzyme in this species is believed to be plastoquinone. Couples the redox reaction to proton translocation, and thus conserves the redox energy in a proton gradient. This is NAD(P)H-quinone oxidoreductase subunit N, organellar chromatophore from Paulinella chromatophora.